The chain runs to 516 residues: Arabinose import ATP-binding protein AraG (516 aa).

ABC transporter domains are found at residues 5–240 (LRFD…MVGR) and 240–497 (REIS…LPQS). 37 to 44 (GENGAGKS) is an ATP binding site.

The protein belongs to the ABC transporter superfamily. Arabinose importer (TC 3.A.1.2.2) family. In terms of assembly, the complex is composed of two ATP-binding proteins (AraG), two transmembrane proteins (AraH) and a solute-binding protein (AraF).

The protein resides in the cell inner membrane. It catalyses the reaction L-arabinose(out) + ATP + H2O = L-arabinose(in) + ADP + phosphate + H(+). In terms of biological role, part of the ABC transporter complex AraFGH involved in arabinose import. Responsible for energy coupling to the transport system. In Paraburkholderia xenovorans (strain LB400), this protein is Arabinose import ATP-binding protein AraG.